The chain runs to 377 residues: Chaperone protein DnaJ (377 aa).

The J domain occupies 5–70 (DYYQVLGVSR…KKRSAYDQLG (66 aa)). The CR-type zinc-finger motif lies at 138 to 216 (GVTKIISFKT…CYGEGRYINT (79 aa)). Zn(2+) contacts are provided by C151, C154, C168, C171, C190, C193, C204, and C207. CXXCXGXG motif repeat units lie at residues 151–158 (CDACAGKG), 168–175 (CPTCRGSG), 190–197 (CQTCRGAG), and 204–211 (CTKCYGEG).

The protein belongs to the DnaJ family. In terms of assembly, homodimer. The cofactor is Zn(2+).

Its subcellular location is the cytoplasm. Its function is as follows. Participates actively in the response to hyperosmotic and heat shock by preventing the aggregation of stress-denatured proteins and by disaggregating proteins, also in an autonomous, DnaK-independent fashion. Unfolded proteins bind initially to DnaJ; upon interaction with the DnaJ-bound protein, DnaK hydrolyzes its bound ATP, resulting in the formation of a stable complex. GrpE releases ADP from DnaK; ATP binding to DnaK triggers the release of the substrate protein, thus completing the reaction cycle. Several rounds of ATP-dependent interactions between DnaJ, DnaK and GrpE are required for fully efficient folding. Also involved, together with DnaK and GrpE, in the DNA replication of plasmids through activation of initiation proteins. This Orientia tsutsugamushi (strain Boryong) (Rickettsia tsutsugamushi) protein is Chaperone protein DnaJ.